We begin with the raw amino-acid sequence, 1755 residues long: Transposon Ty1-DR5 Gag-Pol polyprotein (1755 aa).

Composition is skewed to polar residues over residues methionine 1–proline 10, threonine 48–serine 60, and glutamine 127–phenylalanine 152. Disordered regions lie at residues methionine 1–glutamine 93, proline 126–proline 173, and glycine 352–threonine 421. Positions threonine 153 to threonine 165 are enriched in low complexity. Residues asparagine 299–histidine 401 form an RNA-binding region. Positions asparagine 402 to serine 418 are enriched in low complexity. Aspartate 461 functions as the For protease activity; shared with dimeric partner in the catalytic mechanism. Positions asparagine 583 to cysteine 640 are integrase-type zinc finger-like. The Integrase catalytic domain occupies asparagine 660–proline 835. Positions 671 and 736 each coordinate Mg(2+). Disordered regions lie at residues serine 956 to lysine 1087, arginine 1092 to proline 1111, and aspartate 1130 to threonine 1187. Low complexity predominate over residues serine 960–threonine 969. Over residues serine 1005–threonine 1015 the composition is skewed to polar residues. Residues glutamate 1038–serine 1053 show a composition bias toward basic and acidic residues. Composition is skewed to polar residues over residues tyrosine 1054–aspartate 1082 and proline 1101–proline 1111. A Bipartite nuclear localization signal motif is present at residues lysine 1178–arginine 1212. In terms of domain architecture, Reverse transcriptase Ty1/copia-type spans asparagine 1338 to glutamine 1476. Positions 1346, 1427, 1428, 1610, 1652, and 1685 each coordinate Mg(2+). One can recognise an RNase H Ty1/copia-type domain in the interval aspartate 1610–lysine 1752.

In terms of assembly, the capsid protein forms a homotrimer, from which the VLPs are assembled. The protease is a homodimer, whose active site consists of two apposed aspartic acid residues. Initially, virus-like particles (VLPs) are composed of the structural unprocessed proteins Gag and Gag-Pol, and also contain the host initiator methionine tRNA (tRNA(i)-Met) which serves as a primer for minus-strand DNA synthesis, and a dimer of genomic Ty RNA. Processing of the polyproteins occurs within the particle and proceeds by an ordered pathway, called maturation. First, the protease (PR) is released by autocatalytic cleavage of the Gag-Pol polyprotein yielding capsid protein p45 and a Pol-p154 precursor protein. This cleavage is a prerequisite for subsequent processing of Pol-p154 at the remaining sites to release the mature structural and catalytic proteins. Maturation takes place prior to the RT reaction and is required to produce transposition-competent VLPs.

It localises to the cytoplasm. It is found in the nucleus. The enzyme catalyses DNA(n) + a 2'-deoxyribonucleoside 5'-triphosphate = DNA(n+1) + diphosphate. It catalyses the reaction Endonucleolytic cleavage to 5'-phosphomonoester.. Capsid protein (CA) is the structural component of the virus-like particle (VLP), forming the shell that encapsulates the retrotransposons dimeric RNA genome. The particles are assembled from trimer-clustered units and there are holes in the capsid shells that allow for the diffusion of macromolecules. CA also has nucleocapsid-like chaperone activity, promoting primer tRNA(i)-Met annealing to the multipartite primer-binding site (PBS), dimerization of Ty1 RNA and initiation of reverse transcription. Functionally, the aspartyl protease (PR) mediates the proteolytic cleavages of the Gag and Gag-Pol polyproteins after assembly of the VLP. In terms of biological role, reverse transcriptase/ribonuclease H (RT) is a multifunctional enzyme that catalyzes the conversion of the retro-elements RNA genome into dsDNA within the VLP. The enzyme displays a DNA polymerase activity that can copy either DNA or RNA templates, and a ribonuclease H (RNase H) activity that cleaves the RNA strand of RNA-DNA heteroduplexes during plus-strand synthesis and hydrolyzes RNA primers. The conversion leads to a linear dsDNA copy of the retrotransposon that includes long terminal repeats (LTRs) at both ends. Its function is as follows. Integrase (IN) targets the VLP to the nucleus, where a subparticle preintegration complex (PIC) containing at least integrase and the newly synthesized dsDNA copy of the retrotransposon must transit the nuclear membrane. Once in the nucleus, integrase performs the integration of the dsDNA into the host genome. The chain is Transposon Ty1-DR5 Gag-Pol polyprotein (TY1B-DR5) from Saccharomyces cerevisiae (strain ATCC 204508 / S288c) (Baker's yeast).